Consider the following 829-residue polypeptide: MGGEKFGFLIWILSIPCLIFLCYGYVPVDNYLINCGSSTNVTVTSRVFISDNLASNFLTSPNEILAASNRNSNSDIYQTARIFTGISKYRFSVARGRHWIRLHFNPFQYQNFQMVSAKFSVSSETHVLLSDFTVSSRVMKEYSLNVATDHLELTFTPSGDSFAFLNALEVVSVPDTLFSGDPSFAGSPGKFQGLSWQALETVYRVNMGGPRVTPSNDTLSRIWEPDSEFLVEKNLVKSVSKIASVDYVPGFATEETAPRTVYGTCTEMNSADNPSSNFNVTWDFDVDPGFQYFLRFHFCDIVSKALNQLYFNLYVDSMDVVENLDLSSYLSNTLSGAYAMDFVTGSAKLTKRIRVSIGRSSVHTDYPTAILNGLEIMKMNNSKSQLSIGTFLPSGSSSTTKKNVGMIIGLTIGSLLALVVLGGFFVLYKKRGRDQDGNSKTWIPLSSNGTTSSSNGTTLASIASNSSYRIPLVAVKEATNSFDENRAIGVGGFGKVYKGELHDGTKVAVKRANPKSQQGLAEFRTEIEMLSQFRHRHLVSLIGYCDENNEMILVYEYMENGTLKSHLYGSGLLSLSWKQRLEICIGSARGLHYLHTGDAKPVIHRDVKSANILLDENLMAKVADFGLSKTGPEIDQTHVSTAVKGSFGYLDPEYFRRQQLTEKSDVYSFGVVMFEVLCARPVIDPTLTREMVNLAEWAMKWQKKGQLEHIIDPSLRGKIRPDSLRKFGETGEKCLADYGVDRPSMGDVLWNLEYALQLQEAVVDGDPEDSTNMIGELPLRFNDYNHGDTSVNFSVAKEGRFDEEESSVDDSSGVSMSKVFSQLIKSEGR.

The signal sequence occupies residues 1 to 24 (MGGEKFGFLIWILSIPCLIFLCYG). Residues 25-406 (YVPVDNYLIN…SSTTKKNVGM (382 aa)) lie on the Extracellular side of the membrane. N-linked (GlcNAc...) asparagine glycosylation is found at asparagine 40, asparagine 216, asparagine 279, and asparagine 380. A helical transmembrane segment spans residues 407–427 (IIGLTIGSLLALVVLGGFFVL). At 428-829 (YKKRGRDQDG…FSQLIKSEGR (402 aa)) the chain is on the cytoplasmic side. The 274-residue stretch at 482 to 755 (FDENRAIGVG…GDVLWNLEYA (274 aa)) folds into the Protein kinase domain. Residues 488-496 (IGVGGFGKV) and lysine 510 contribute to the ATP site. Catalysis depends on aspartate 606, which acts as the Proton acceptor.

This sequence belongs to the protein kinase superfamily. Ser/Thr protein kinase family.

The protein localises to the cell membrane. The chain is Probable receptor-like protein kinase At5g59700 from Arabidopsis thaliana (Mouse-ear cress).